The following is a 195-amino-acid chain: Interferon tau-2 (195 aa).

Positions 1–23 are cleaved as a signal peptide; the sequence is MAFVLSLLMALVLVSYGPGGSLG. 2 disulfide bridges follow: Cys24/Cys122 and Cys52/Cys162.

This sequence belongs to the alpha/beta interferon family. IFN-alphaII subfamily. Constitutively and exclusively expressed in the mononuclear cells of the extraembryonic trophectoderm.

The protein resides in the secreted. Its function is as follows. Paracrine hormone primarily responsible for maternal recognition of pregnancy. Interacts with endometrial receptors, probably type I interferon receptors, and blocks estrogen receptor expression, preventing the estrogen-induced increase in oxytocin receptor expression in the endometrium. This results in the suppression of the pulsatile endometrial release of the luteolytic hormone prostaglandin F2-alpha, hindering the regression of the corpus luteum (luteolysis) and therefore a return to ovarian cyclicity. This, and a possible direct effect of IFN-tau on prostaglandin synthesis, leads in turn to continued ovarian progesterone secretion, which stimulates the secretion by the endometrium of the nutrients required for the growth of the conceptus. In summary, displays particularly high antiviral and antiproliferative potency concurrently with particular weak cytotoxicity, high antiluteolytic activity and immunomodulatory properties. In contrast with other IFNs, IFN-tau is not virally inducible. The protein is Interferon tau-2 (IFNT2) of Ovis aries (Sheep).